The chain runs to 147 residues: NADH-ubiquinone oxidoreductase chain 3 (147 aa).

The next 3 membrane-spanning stretches (helical) occupy residues 6 to 26 (LFILFVSIIALLFLLINLVFA), 60 to 80 (AICFVILDLEIFTMFPYVGSL), and 84 to 104 (TFYSLVVILGFMFVVSAGFVF).

Belongs to the complex I subunit 3 family.

Its subcellular location is the mitochondrion membrane. It catalyses the reaction a ubiquinone + NADH + 5 H(+)(in) = a ubiquinol + NAD(+) + 4 H(+)(out). In terms of biological role, core subunit of the mitochondrial membrane respiratory chain NADH dehydrogenase (Complex I) that is believed to belong to the minimal assembly required for catalysis. Complex I functions in the transfer of electrons from NADH to the respiratory chain. The immediate electron acceptor for the enzyme is believed to be ubiquinone. This is NADH-ubiquinone oxidoreductase chain 3 (ndh-3) from Neurospora crassa (strain ATCC 24698 / 74-OR23-1A / CBS 708.71 / DSM 1257 / FGSC 987).